The chain runs to 103 residues: Pro-corazonin (103 aa).

The N-terminal stretch at 1–19 (MSANVTLLLIFVTLASVTA) is a signal peptide. At glutamine 20 the chain carries Pyrrolidone carboxylic acid. Residue asparagine 30 is modified to Asparagine amide. Residues 34–103 (DQGHLRPELK…NLNAMMDAFY (70 aa)) constitute a propeptide that is removed on maturation.

As to expression, expressed in corpora cardiaca (CC), corpora allata (CA), antennal lobe (AL) and gnathal ganglion (GNG) (at protein level). Expression in CC and CA detected in all animals, expression in AL and in GNG in some animals.

It localises to the secreted. Its function is as follows. Cardioactive peptide. Corazonin is probably involved in the physiological regulation of the heart beat. In Agrotis ipsilon (Black cutworm moth), this protein is Pro-corazonin.